Here is a 1043-residue protein sequence, read N- to C-terminus: tRNA wybutosine-synthesizing protein 2/3/4 (1043 aa).

Residues 1 to 233 are tRNA wybutosine-synthesizing protein 3 homolog; the sequence is MEFDRRKAAA…PVLQNGAKHG (233 aa). Residues 53–75 are disordered; the sequence is RVSVLAQPPPPQQADPGGAKTKK. 4 Kelch repeats span residues 360-410, 412-460, 461-510, and 512-559; these read DIYV…AVDR, VYVF…SYGS, KLFL…IYKD, and LGIL…VIID. A tRNA wybutosine-synthesizing protein 2 homolog region spans residues 700–1041; it reads QPDDSCVFEE…RHLVVDVKCR (342 aa). S-adenosyl-L-methionine contacts are provided by residues lysine 874 and 942–943; that span reads DN.

It in the C-terminal section; belongs to the class I-like SAM-binding methyltransferase superfamily. TRM5/TYW2 family. The protein in the N-terminal section; belongs to the TYW3 family.

It catalyses the reaction 4-demethyl-7-[(3S)-3-amino-3-carboxypropyl]wyosine(37) in tRNA(Phe) + S-adenosyl-L-methionine = 7-[(3S)-3-amino-3-carboxypropyl]wyosine(37) in tRNA(Phe) + S-adenosyl-L-homocysteine + H(+). The enzyme catalyses 4-demethylwyosine(37) in tRNA(Phe) + S-adenosyl-L-methionine = 4-demethyl-7-[(3S)-3-amino-3-carboxypropyl]wyosine(37) in tRNA(Phe) + S-methyl-5'-thioadenosine + H(+). The protein operates within tRNA modification; wybutosine-tRNA(Phe) biosynthesis. Functionally, S-adenosyl-L-methionine-dependent transferase that acts as a component of the wybutosine biosynthesis pathway. Wybutosine is a hyper modified guanosine with a tricyclic base found at the 3'-position adjacent to the anticodon of eukaryotic phenylalanine tRNA. The chain is tRNA wybutosine-synthesizing protein 2/3/4 from Oryza sativa subsp. japonica (Rice).